Reading from the N-terminus, the 868-residue chain is DNA mismatch repair protein MutS (868 aa).

620-627 (GPNMGGKS) lines the ATP pocket.

It belongs to the DNA mismatch repair MutS family.

Its function is as follows. This protein is involved in the repair of mismatches in DNA. It is possible that it carries out the mismatch recognition step. This protein has a weak ATPase activity. This chain is DNA mismatch repair protein MutS, found in Xylella fastidiosa (strain 9a5c).